The primary structure comprises 226 residues: ATP-dependent dethiobiotin synthetase BioD (226 aa).

ATP is bound at residue 13–18; it reads DVGKTL. Residue T17 participates in Mg(2+) binding. K38 is an active-site residue. ATP contacts are provided by residues D55, 117–120, 177–178, 206–208, and E213; these read EGAG, NR, and PFV. D55 and E117 together coordinate Mg(2+).

It belongs to the dethiobiotin synthetase family. In terms of assembly, homodimer. Requires Mg(2+) as cofactor.

The protein localises to the cytoplasm. The enzyme catalyses (7R,8S)-7,8-diammoniononanoate + CO2 + ATP = (4R,5S)-dethiobiotin + ADP + phosphate + 3 H(+). The protein operates within cofactor biosynthesis; biotin biosynthesis; biotin from 7,8-diaminononanoate: step 1/2. In terms of biological role, catalyzes a mechanistically unusual reaction, the ATP-dependent insertion of CO2 between the N7 and N8 nitrogen atoms of 7,8-diaminopelargonic acid (DAPA, also called 7,8-diammoniononanoate) to form a ureido ring. This chain is ATP-dependent dethiobiotin synthetase BioD, found in Aeromonas hydrophila subsp. hydrophila (strain ATCC 7966 / DSM 30187 / BCRC 13018 / CCUG 14551 / JCM 1027 / KCTC 2358 / NCIMB 9240 / NCTC 8049).